Consider the following 138-residue polypeptide: MRTLWIVAVCLIGVEGNLFQFGDMILQKTGKEAVHSYAIYGCYCGWGGQGRAQDATDRCCFAQDCCYGRVNDCNPKTATYTYSFENGDIVCGDNDLCLRAVCECDRAAAICLGENVNTYDKNYEYYSISHCTEESEQC.

Positions 1–16 are cleaved as a signal peptide; that stretch reads MRTLWIVAVCLIGVEG. Cystine bridges form between C42/C131, C44/C60, C59/C111, C65/C138, C66/C104, C73/C97, and C91/C102.

In terms of assembly, heterodimer of an acidic and a basic chain; non-covalently linked. The basic chain is toxic and has phospholipase A2 activity (chain HDP-1P (AC Q1RP79) or HDP-2P (AC Q1RP78)) and the acidic chain is non-toxic and functions as its inhibitor (chain HPD-1I). Expressed by the venom gland.

It is found in the secreted. Its function is as follows. Heterodimer: slightly affects neuromuscular transmission acting presynaptically. It has a low catalytic activity, a low anticoagulant activity and weakly inhibits ADP-induced platelet aggregation. Functionally, monomer: has no activity (neurotoxic, catalytic, anticoagulant and a ADP-induced platelet aggregation), but inhibits phospholipase A2. The polypeptide is Acidic phospholipase A2 inhibitor chain HPD-1I (Vipera nikolskii (Nikolsky's adder)).